The sequence spans 171 residues: 3-hydroxydecanoyl-[acyl-carrier-protein] dehydratase (171 aa).

The active site involves H70.

This sequence belongs to the thioester dehydratase family. FabA subfamily. In terms of assembly, homodimer.

It localises to the cytoplasm. The catalysed reaction is a (3R)-hydroxyacyl-[ACP] = a (2E)-enoyl-[ACP] + H2O. It catalyses the reaction (3R)-hydroxydecanoyl-[ACP] = (2E)-decenoyl-[ACP] + H2O. The enzyme catalyses (2E)-decenoyl-[ACP] = (3Z)-decenoyl-[ACP]. The protein operates within lipid metabolism; fatty acid biosynthesis. Functionally, necessary for the introduction of cis unsaturation into fatty acids. Catalyzes the dehydration of (3R)-3-hydroxydecanoyl-ACP to E-(2)-decenoyl-ACP and then its isomerization to Z-(3)-decenoyl-ACP. Can catalyze the dehydratase reaction for beta-hydroxyacyl-ACPs with saturated chain lengths up to 16:0, being most active on intermediate chain length. This is 3-hydroxydecanoyl-[acyl-carrier-protein] dehydratase from Vibrio campbellii (strain ATCC BAA-1116).